We begin with the raw amino-acid sequence, 783 residues long: BMP/retinoic acid-inducible neural-specific protein 2 (783 aa).

The N-terminal stretch at 1-33 (MRWPCSSWFRGLWPEAAPWAVLLALGVPGWVLA) is a signal peptide. The 197-residue stretch at 85 to 281 (RYRIYREFAR…FVAAALSYIT (197 aa)) folds into the MACPF domain. Residues asparagine 185, asparagine 354, asparagine 473, asparagine 579, asparagine 626, and asparagine 658 are each glycosylated (N-linked (GlcNAc...) asparagine).

The protein belongs to the BRINP family. As to expression, weakly expressed in embryonic stem (ES) cells. Strongly expressed in ES-derived neural stem cells (NSCs).

Its subcellular location is the secreted. Inhibits neuronal cell proliferation by negative regulation of the cell cycle transition. The polypeptide is BMP/retinoic acid-inducible neural-specific protein 2 (Brinp2) (Mus musculus (Mouse)).